Here is a 343-residue protein sequence, read N- to C-terminus: Probable dual-specificity RNA methyltransferase RlmN (343 aa).

Glu91 (proton acceptor) is an active-site residue. The 231-residue stretch at 97–327 (YKHGNSICVS…TTIRREMGSD (231 aa)) folds into the Radical SAM core domain. Cysteines 104 and 332 form a disulfide. 3 residues coordinate [4Fe-4S] cluster: Cys111, Cys115, and Cys118. S-adenosyl-L-methionine-binding positions include 158 to 159 (GE), Ser190, 213 to 215 (SLH), and Asn289. Residue Cys332 is the S-methylcysteine intermediate of the active site.

It belongs to the radical SAM superfamily. RlmN family. [4Fe-4S] cluster is required as a cofactor.

The protein resides in the cytoplasm. It carries out the reaction adenosine(2503) in 23S rRNA + 2 reduced [2Fe-2S]-[ferredoxin] + 2 S-adenosyl-L-methionine = 2-methyladenosine(2503) in 23S rRNA + 5'-deoxyadenosine + L-methionine + 2 oxidized [2Fe-2S]-[ferredoxin] + S-adenosyl-L-homocysteine. It catalyses the reaction adenosine(37) in tRNA + 2 reduced [2Fe-2S]-[ferredoxin] + 2 S-adenosyl-L-methionine = 2-methyladenosine(37) in tRNA + 5'-deoxyadenosine + L-methionine + 2 oxidized [2Fe-2S]-[ferredoxin] + S-adenosyl-L-homocysteine. Functionally, specifically methylates position 2 of adenine 2503 in 23S rRNA and position 2 of adenine 37 in tRNAs. This Clostridium novyi (strain NT) protein is Probable dual-specificity RNA methyltransferase RlmN.